The sequence spans 167 residues: NAD(P)H-quinone oxidoreductase subunit I, chloroplastic (167 aa).

4Fe-4S ferredoxin-type domains follow at residues 55–84 (GRIHFEFDKCIACEVCVRVCPIDLPVVDWK) and 95–124 (LNYSIDFGICIFCGNCVEYCPTNCLSMTEE). Residues C64, C67, C70, C74, C104, C107, C110, and C114 each contribute to the [4Fe-4S] cluster site.

It belongs to the complex I 23 kDa subunit family. As to quaternary structure, NDH is composed of at least 16 different subunits, 5 of which are encoded in the nucleus. The cofactor is [4Fe-4S] cluster.

It is found in the plastid. Its subcellular location is the chloroplast thylakoid membrane. It carries out the reaction a plastoquinone + NADH + (n+1) H(+)(in) = a plastoquinol + NAD(+) + n H(+)(out). The enzyme catalyses a plastoquinone + NADPH + (n+1) H(+)(in) = a plastoquinol + NADP(+) + n H(+)(out). Functionally, NDH shuttles electrons from NAD(P)H:plastoquinone, via FMN and iron-sulfur (Fe-S) centers, to quinones in the photosynthetic chain and possibly in a chloroplast respiratory chain. The immediate electron acceptor for the enzyme in this species is believed to be plastoquinone. Couples the redox reaction to proton translocation, and thus conserves the redox energy in a proton gradient. The sequence is that of NAD(P)H-quinone oxidoreductase subunit I, chloroplastic from Lepidium virginicum (Virginia pepperweed).